The sequence spans 461 residues: Photosystem II CP43 reaction center protein (461 aa).

Positions 1–2 are excised as a propeptide; the sequence is ME. An N-acetylthreonine modification is found at Thr3. At Thr3 the chain carries Phosphothreonine. The next 5 helical transmembrane spans lie at 57–81, 122–143, 166–188, 243–263, and 279–300; these read LFEV…PHIA, LIGP…KDKN, KAMY…RVIT, TPWP…LSYS, and WFNN…ASQS. Glu355 is a [CaMn4O5] cluster binding site. The helical transmembrane segment at 435–459 threads the bilayer; it reads RARAAAAGFEKGIDRFDEPVLSMRP.

Belongs to the PsbB/PsbC family. PsbC subfamily. PSII is composed of 1 copy each of membrane proteins PsbA, PsbB, PsbC, PsbD, PsbE, PsbF, PsbH, PsbI, PsbJ, PsbK, PsbL, PsbM, PsbT, PsbX, PsbY, PsbZ, Psb30/Ycf12, at least 3 peripheral proteins of the oxygen-evolving complex and a large number of cofactors. It forms dimeric complexes. Binds multiple chlorophylls and provides some of the ligands for the Ca-4Mn-5O cluster of the oxygen-evolving complex. It may also provide a ligand for a Cl- that is required for oxygen evolution. PSII binds additional chlorophylls, carotenoids and specific lipids. is required as a cofactor. In terms of processing, phosphorylated in vitro.

The protein localises to the plastid. Its subcellular location is the chloroplast thylakoid membrane. One of the components of the core complex of photosystem II (PSII). It binds chlorophyll and helps catalyze the primary light-induced photochemical processes of PSII. PSII is a light-driven water:plastoquinone oxidoreductase, using light energy to abstract electrons from H(2)O, generating O(2) and a proton gradient subsequently used for ATP formation. This Chlamydomonas reinhardtii (Chlamydomonas smithii) protein is Photosystem II CP43 reaction center protein.